The chain runs to 778 residues: Glutathione biosynthesis bifunctional protein GshAB (778 aa).

Residues 1–354 are glutamate--cysteine ligase; it reads MVNLDKGLLK…EEFFKNHDMV (354 aa). An ATP-grasp domain is found at 521–777; it reads KDILRENNIR…AGEKILDLLF (257 aa). 548 to 606 serves as a coordination point for ATP; it reads RLFKDEKIVIKPKSTNFGLGISIFPGEYSREDYDKAVEIAFREDSSILIEEFMTGKEYR. Mg(2+)-binding residues include D728, E747, and N749. Residues D728, E747, and N749 each coordinate Mn(2+).

In the N-terminal section; belongs to the glutamate--cysteine ligase type 1 family. Type 2 subfamily. In terms of assembly, monomer. It depends on Mg(2+) as a cofactor. Mn(2+) serves as cofactor.

The enzyme catalyses L-cysteine + L-glutamate + ATP = gamma-L-glutamyl-L-cysteine + ADP + phosphate + H(+). The catalysed reaction is gamma-L-glutamyl-L-cysteine + glycine + ATP = glutathione + ADP + phosphate + H(+). The protein operates within sulfur metabolism; glutathione biosynthesis; glutathione from L-cysteine and L-glutamate: step 1/2. It functions in the pathway sulfur metabolism; glutathione biosynthesis; glutathione from L-cysteine and L-glutamate: step 2/2. Its function is as follows. Synthesizes glutathione from L-glutamate and L-cysteine via gamma-L-glutamyl-L-cysteine. This Clostridium perfringens (strain 13 / Type A) protein is Glutathione biosynthesis bifunctional protein GshAB.